The sequence spans 143 residues: UPF0260 protein plu2141 (143 aa).

It belongs to the UPF0260 family.

This chain is UPF0260 protein plu2141, found in Photorhabdus laumondii subsp. laumondii (strain DSM 15139 / CIP 105565 / TT01) (Photorhabdus luminescens subsp. laumondii).